The sequence spans 60 residues: Large ribosomal subunit protein uL30 (60 aa).

Belongs to the universal ribosomal protein uL30 family. Part of the 50S ribosomal subunit.

The polypeptide is Large ribosomal subunit protein uL30 (Burkholderia mallei (strain NCTC 10247)).